The following is a 500-amino-acid chain: ADP,ATP carrier protein 5 (500 aa).

A run of 11 helical transmembrane segments spans residues 21-41 (IYNY…CILF), 62-82 (IAGF…VIIY), 94-114 (IFYY…FVIY), 149-169 (YIVY…LLFW), 184-204 (FYTL…FLMM), 224-244 (ITLV…CCLL), 287-307 (LWLL…VEAV), 328-348 (LYIL…NNVM), 357-377 (AVIS…LIVF), 381-401 (ILSL…VSIG), and 469-489 (SISP…IYAV).

Belongs to the ADP/ATP translocase tlc family.

The protein resides in the cell membrane. In terms of biological role, provides the rickettsial cell with host ATP in exchange for rickettsial ADP. This is an obligate exchange system. This energy acquiring activity is an important component of rickettsial parasitism. This chain is ADP,ATP carrier protein 5 (tlcE), found in Rickettsia bellii (strain RML369-C).